Reading from the N-terminus, the 312-residue chain is DNA-directed RNA polymerase subunit alpha (312 aa).

The segment at 1–226 (MIEFEKPKIT…DHLNLFVDLS (226 aa)) is alpha N-terminal domain (alpha-NTD). The segment at 243–312 (TERVLDKIIE…ELGLSLKKRK (70 aa)) is alpha C-terminal domain (alpha-CTD).

It belongs to the RNA polymerase alpha chain family. As to quaternary structure, homodimer. The RNAP catalytic core consists of 2 alpha, 1 beta, 1 beta' and 1 omega subunit. When a sigma factor is associated with the core the holoenzyme is formed, which can initiate transcription.

It carries out the reaction RNA(n) + a ribonucleoside 5'-triphosphate = RNA(n+1) + diphosphate. Its function is as follows. DNA-dependent RNA polymerase catalyzes the transcription of DNA into RNA using the four ribonucleoside triphosphates as substrates. The chain is DNA-directed RNA polymerase subunit alpha from Lactococcus lactis subsp. cremoris (strain MG1363).